We begin with the raw amino-acid sequence, 458 residues long: tRNA modification GTPase MnmE (458 aa).

3 residues coordinate (6S)-5-formyl-5,6,7,8-tetrahydrofolate: R30, E90, and K129. The 155-residue stretch at 225-379 (GLSICLIGCP…LHQTIDTIIW (155 aa)) folds into the TrmE-type G domain. Position 235 (N235) interacts with K(+). GTP contacts are provided by residues 235 to 240 (NVGKSS), 254 to 260 (SPIPGTT), and 279 to 282 (DTAG). S239 contributes to the Mg(2+) binding site. Residues S254, I256, and T259 each contribute to the K(+) site. T260 contacts Mg(2+). A (6S)-5-formyl-5,6,7,8-tetrahydrofolate-binding site is contributed by K458.

The protein belongs to the TRAFAC class TrmE-Era-EngA-EngB-Septin-like GTPase superfamily. TrmE GTPase family. As to quaternary structure, homodimer. Heterotetramer of two MnmE and two MnmG subunits. Requires K(+) as cofactor.

The protein localises to the cytoplasm. Its function is as follows. Exhibits a very high intrinsic GTPase hydrolysis rate. Involved in the addition of a carboxymethylaminomethyl (cmnm) group at the wobble position (U34) of certain tRNAs, forming tRNA-cmnm(5)s(2)U34. The chain is tRNA modification GTPase MnmE from Protochlamydia amoebophila (strain UWE25).